Reading from the N-terminus, the 67-residue chain is Conotoxin Lt5.9 (67 aa).

The first 19 residues, 1–19, serve as a signal peptide directing secretion; that stretch reads MLCLPVFIILLLLASPAAP. A propeptide spanning residues 20–46 is cleaved from the precursor; the sequence is KSFETKVQSDLTRTDGNMETEENLGEV.

It belongs to the conotoxin T superfamily. Contains 2 disulfide bonds that can be either 'C1-C3, C2-C4' or 'C1-C4, C2-C3', since these disulfide connectivities have been observed for conotoxins with cysteine framework V (for examples, see AC P0DQQ7 and AC P81755). Expressed by the venom duct.

The protein resides in the secreted. The chain is Conotoxin Lt5.9 from Conus litteratus (Lettered cone).